We begin with the raw amino-acid sequence, 297 residues long: UBX domain-containing protein 1 (297 aa).

At alanine 2 the chain carries N-acetylalanine. Residues 2–42 form the UBA domain; the sequence is AELTALESLIEMGFPKGRAEKALALTGNQGIEAAMDWLMEH. The disordered stretch occupies residues 40–210; the sequence is MEHEDDPDVD…PSREPPTKRE (171 aa). Residues 43 to 297 are interaction with BRCA1; it reads EDDPDVDEPL…VLIVAKKCPG (255 aa). Basic and acidic residues-rich tracts occupy residues 86 to 122 and 137 to 177; these read LTEE…ERER and RLQE…ERAK. Residues 86-176 adopt a coiled-coil conformation; the sequence is LTEEERQEQT…KIERDKAERA (91 aa). Over residues 187 to 199 the composition is skewed to pro residues; that stretch reads PSPPATEPGPVPS. The residue at position 199 (serine 199) is a Phosphoserine. The residue at position 200 (serine 200) is a Phosphoserine; by MAPK12. Phosphothreonine is present on residues threonine 207 and threonine 229. The 83-residue stretch at 209-291 folds into the UBX domain; sequence REYDQCRIQV…GLVPSAVLIV (83 aa). At serine 270 the chain carries Phosphoserine.

In terms of assembly, component of a complex required to couple retrotranslocation, ubiquitination and deglycosylation composed of NGLY1, SAKS1, AMFR, VCP and RAD23B. Interacts with HOMER2. Interacts directly with VCP. Interacts with BRCA1 and BARD1; interaction takes place when BRCA1 is not autoubiquitinated bur is strongly enhanced in the presence of autoubiquitinated BRCA1.

The protein resides in the cytoplasm. Its function is as follows. Ubiquitin-binding protein that interacts with the BRCA1-BARD1 heterodimer, and regulates its activity. Specifically binds 'Lys-6'-linked polyubiquitin chains. Interaction with autoubiquitinated BRCA1, leads to inhibit the E3 ubiquitin-protein ligase activity of the BRCA1-BARD1 heterodimer. Component of a complex required to couple deglycosylation and proteasome-mediated degradation of misfolded proteins in the endoplasmic reticulum that are retrotranslocated in the cytosol. This chain is UBX domain-containing protein 1 (UBXN1), found in Bos taurus (Bovine).